Reading from the N-terminus, the 227-residue chain is Cytidylate kinase (227 aa).

12–20 (GPSGAGKGT) lines the ATP pocket.

Belongs to the cytidylate kinase family. Type 1 subfamily.

The protein localises to the cytoplasm. The enzyme catalyses CMP + ATP = CDP + ADP. It catalyses the reaction dCMP + ATP = dCDP + ADP. This is Cytidylate kinase from Escherichia fergusonii (strain ATCC 35469 / DSM 13698 / CCUG 18766 / IAM 14443 / JCM 21226 / LMG 7866 / NBRC 102419 / NCTC 12128 / CDC 0568-73).